Here is a 215-residue protein sequence, read N- to C-terminus: Chaperone protein TorD (215 aa).

It belongs to the TorD/DmsD family. TorD subfamily.

The protein resides in the cytoplasm. Its function is as follows. Involved in the biogenesis of TorA. Acts on TorA before the insertion of the molybdenum cofactor and, as a result, probably favors a conformation of the apoenzyme that is competent for acquiring the cofactor. The sequence is that of Chaperone protein TorD from Vibrio vulnificus (strain YJ016).